The sequence spans 280 residues: Movement protein (280 aa).

The disordered stretch occupies residues 248-267 (ESEELNVESPPAAIGSSSAS). The span at 255–267 (ESPPAAIGSSSAS) shows a compositional bias: low complexity.

Belongs to the cucumovirus movement protein family.

Its subcellular location is the host cell junction. It is found in the host plasmodesma. In terms of biological role, transports viral genome to neighboring plant cells directly through plasmosdesmata, without any budding. The movement protein allows efficient cell to cell propagation, by bypassing the host cell wall barrier. Acts by forming a tubular structure at the host plasmodesmata, enlarging it enough to allow free passage of virion capsids. This is Movement protein from Cucumis sativus (Cucumber).